Reading from the N-terminus, the 508-residue chain is Photosystem II CP47 reaction center protein (508 aa).

The next 6 membrane-spanning stretches (helical) occupy residues 21-36 (SVHI…WAGS), 101-115 (IVFS…IWHW), 140-156 (GIHL…FGAF), 203-218 (IAAG…FHLS), 237-252 (VLSS…AFVV), and 457-472 (TFAL…HGAR).

The protein belongs to the PsbB/PsbC family. PsbB subfamily. In terms of assembly, PSII is composed of 1 copy each of membrane proteins PsbA, PsbB, PsbC, PsbD, PsbE, PsbF, PsbH, PsbI, PsbJ, PsbK, PsbL, PsbM, PsbT, PsbX, PsbY, PsbZ, Psb30/Ycf12, at least 3 peripheral proteins of the oxygen-evolving complex and a large number of cofactors. It forms dimeric complexes. Requires Binds multiple chlorophylls. PSII binds additional chlorophylls, carotenoids and specific lipids. as cofactor.

It is found in the plastid. The protein localises to the chloroplast thylakoid membrane. One of the components of the core complex of photosystem II (PSII). It binds chlorophyll and helps catalyze the primary light-induced photochemical processes of PSII. PSII is a light-driven water:plastoquinone oxidoreductase, using light energy to abstract electrons from H(2)O, generating O(2) and a proton gradient subsequently used for ATP formation. In Drimys granadensis, this protein is Photosystem II CP47 reaction center protein.